A 346-amino-acid polypeptide reads, in one-letter code: Biotin synthase (346 aa).

Positions 38–256 constitute a Radical SAM core domain; the sequence is QQVQVSTLLS…IAVARIMMPT (219 aa). The [4Fe-4S] cluster site is built by cysteine 53, cysteine 57, and cysteine 60. [2Fe-2S] cluster contacts are provided by cysteine 97, cysteine 128, cysteine 188, and arginine 260.

Belongs to the radical SAM superfamily. Biotin synthase family. Homodimer. The cofactor is [4Fe-4S] cluster. Requires [2Fe-2S] cluster as cofactor.

It carries out the reaction (4R,5S)-dethiobiotin + (sulfur carrier)-SH + 2 reduced [2Fe-2S]-[ferredoxin] + 2 S-adenosyl-L-methionine = (sulfur carrier)-H + biotin + 2 5'-deoxyadenosine + 2 L-methionine + 2 oxidized [2Fe-2S]-[ferredoxin]. It functions in the pathway cofactor biosynthesis; biotin biosynthesis; biotin from 7,8-diaminononanoate: step 2/2. Its function is as follows. Catalyzes the conversion of dethiobiotin (DTB) to biotin by the insertion of a sulfur atom into dethiobiotin via a radical-based mechanism. The polypeptide is Biotin synthase (Citrobacter koseri (strain ATCC BAA-895 / CDC 4225-83 / SGSC4696)).